We begin with the raw amino-acid sequence, 507 residues long: Protein DETOXIFICATION 41 (507 aa).

Topologically, residues 1 to 62 (MSSTETYEPL…KLLWTLSGAS (62 aa)) are cytoplasmic. The helical transmembrane segment at 63 to 83 (IVVSVLNYMLSFVTVMFTGHL) threads the bilayer. At 84 to 92 (GSLQLAGAS) the chain is on the vacuolar side. Residues 93 to 113 (IATVGIQGLAYGIMLGMASAV) form a helical membrane-spanning segment. The Cytoplasmic segment spans residues 114 to 137 (QTVCGQAYGARQYSSMGIICQRAM). Residues 138–158 (VLHLAAAVFLTFLYWYSGPIL) form a helical membrane-spanning segment. At 159–170 (KTMGQSVAIAHE) the chain is on the vacuolar side. Residues 171 to 191 (GQIFARGMIPQIYAFALACPM) traverse the membrane as a helical segment. Topologically, residues 192–202 (QRFLQAQNIVN) are cytoplasmic. A helical membrane pass occupies residues 203–223 (PLAYMSLGVFLLHTLLTWLVT). A topological domain (vacuolar) is located at residue asparagine 224. The helical transmembrane segment at 225 to 245 (VLDFGLLGAALILSFSWWLLV) threads the bilayer. Residues 246–283 (AVNGMYILMSPNCKETWTGFSTRAFRGIWPYFKLTVAS) are Cytoplasmic-facing. The chain crosses the membrane as a helical span at residues 284 to 304 (AVMLCLEIWYNQGLVIISGLL). Over 305–312 (SNPTISLD) the chain is Vacuolar. Residues 313 to 333 (AISICMYYLNWDMQFMLGLSA) traverse the membrane as a helical segment. Residues 334–355 (AISVRVSNELGAGNPRVAMLSV) are Cytoplasmic-facing. The chain crosses the membrane as a helical span at residues 356–376 (VVVNITTVLISSVLCVIVLVF). Residues 377 to 389 (RVGLSKAFTSDAE) are Vacuolar-facing. Residues 390 to 410 (VIAAVSDLFPLLAVSIFLNGI) form a helical membrane-spanning segment. The Cytoplasmic portion of the chain corresponds to 411 to 425 (QPILSGVAIGSGWQA). A helical membrane pass occupies residues 426–446 (VVAYVNLVTYYVIGLPIGCVL). Topologically, residues 447 to 453 (GFKTSLG) are vacuolar. Residues 454–474 (VAGIWWGMIAGVILQTLTLIV) form a helical membrane-spanning segment. At 475–507 (LTLKTNWTSEVENAAQRVKTSATENQEMANAGV) the chain is on the cytoplasmic side.

This sequence belongs to the multi antimicrobial extrusion (MATE) (TC 2.A.66.1) family. In terms of tissue distribution, expressed in reproductive tissues, from buds to siliques. Restricted to the endothelium layer of the ovule and the seed coat.

The protein localises to the vacuole membrane. It participates in secondary metabolite biosynthesis; flavonoid biosynthesis. In terms of biological role, acts as a flavonoid/H(+)-antiporter that control the vacuolar sequestration of flavonoids in the seed coat endothelium. Could transport the anthocyanin cyanidin-3-O-glucoside and epicatechin 3'-O-glucoside in vitro. This chain is Protein DETOXIFICATION 41, found in Arabidopsis thaliana (Mouse-ear cress).